A 75-amino-acid chain; its full sequence is Exodeoxyribonuclease 7 small subunit (75 aa).

Belongs to the XseB family. In terms of assembly, heterooligomer composed of large and small subunits.

Its subcellular location is the cytoplasm. The catalysed reaction is Exonucleolytic cleavage in either 5'- to 3'- or 3'- to 5'-direction to yield nucleoside 5'-phosphates.. Bidirectionally degrades single-stranded DNA into large acid-insoluble oligonucleotides, which are then degraded further into small acid-soluble oligonucleotides. This Geobacter sp. (strain M21) protein is Exodeoxyribonuclease 7 small subunit.